The sequence spans 304 residues: Acetaldehyde dehydrogenase 4 (304 aa).

The active-site Acyl-thioester intermediate is the Cys-131. NAD(+) is bound by residues 162-170 (SAGPGTRKN) and Asn-273.

The protein belongs to the acetaldehyde dehydrogenase family. In terms of assembly, heterotetramer composed of two BphI (aldolase) and two BphJ (dehydrogenase).

The enzyme catalyses acetaldehyde + NAD(+) + CoA = acetyl-CoA + NADH + H(+). It carries out the reaction propanal + NAD(+) + CoA = propanoyl-CoA + NADH + H(+). Its pathway is xenobiotic degradation; polychlorinated biphenyl degradation. Its activity is regulated as follows. Bound pyruvate or other intermediates in the aldol addition reaction catalyzed by BphI allosterically activates BphJ reductive deacylation activity. Catalyzes the conversion of acetaldehyde or propanal to acetyl-CoA or propanoyl-CoA, respectively, using NAD(+) and coenzyme A. Displays broad specificity since it can utilize aliphatic aldehydes from two to five carbons in length as substrates; the aldehyde substrates can be directly channeled from the aldolase BphI to the dehydrogenase BphJ. Is the final enzyme in the meta-cleavage pathway for the degradation of polychlorinated biphenyls (PCBs). Is also able to utilize NADP(+) instead of NAD(+). Is not active with succinic semialdehyde or picolinaldehyde as substrates. Can also catalyze the reverse reaction, i.e. the reductive deacylation of acetyl-CoA to acetaldehyde, which is then channeled to the BphI active site. The BphI-BphJ enzyme complex exhibits unique bidirectionality in substrate channeling and allosteric activation. This chain is Acetaldehyde dehydrogenase 4 (bphJ), found in Paraburkholderia xenovorans (strain LB400).